The primary structure comprises 100 residues: Small ribosomal subunit protein uS14c (100 aa).

This sequence belongs to the universal ribosomal protein uS14 family. In terms of assembly, part of the 30S ribosomal subunit.

It localises to the plastid. It is found in the chloroplast. Its function is as follows. Binds 16S rRNA, required for the assembly of 30S particles. The protein is Small ribosomal subunit protein uS14c of Arabis hirsuta (Hairy rock-cress).